A 688-amino-acid chain; its full sequence is PTS system glucoside-specific EIICBA component (688 aa).

The region spanning 3–427 is the PTS EIIC type-1 domain; the sequence is KKLFGQLQRI…FKLKTPGRED (425 aa). A run of 10 helical transmembrane segments spans residues 12 to 32, 81 to 101, 137 to 157, 182 to 202, 223 to 243, 284 to 304, 315 to 335, 340 to 360, 364 to 384, and 395 to 415; these read IGKALMLPVAILPAAGILLAF, LGLAGGDGVAALAALVGYLIM, LVLGIPTLQTGVFGGIIMGAL, FVPIVTSVVAIATGVVLSFAW, LTTFIFGIIERSLIPFGLHHI, AFTTGKYPFMMFGLPAAAFAI, VVGGLMLSAGLTAFLTGITEP, FLFVAPVLYGIHVLLAGTSFL, LLGVKIGMTFSGGFIDYILYG, and LVIPVGIVYAIVYYFLFDFAI. In terms of domain architecture, PTS EIIB type-1 spans 438–519; sequence AKLPFDVLDA…AKIMSGEITK (82 aa). Catalysis depends on cysteine 460, which acts as the Phosphocysteine intermediate; for EIIB activity. In terms of domain architecture, PTS EIIA type-1 spans 560–664; that stretch reads DQVFAGKMMG…SIVTPMIITN (105 aa). Catalysis depends on histidine 612, which acts as the Tele-phosphohistidine intermediate; for EIIA activity.

Its subcellular location is the cell membrane. Functionally, the phosphoenolpyruvate-dependent sugar phosphotransferase system (sugar PTS), a major carbohydrate active -transport system, catalyzes the phosphorylation of incoming sugar substrates concomitantly with their translocation across the cell membrane. This system is involved in alpha- and beta-glucoside transport. This is PTS system glucoside-specific EIICBA component (glcB) from Staphylococcus aureus (strain bovine RF122 / ET3-1).